The following is a 263-amino-acid chain: Trans-aconitate 2-methyltransferase (263 aa).

Belongs to the methyltransferase superfamily. Tam family.

It is found in the cytoplasm. The enzyme catalyses trans-aconitate + S-adenosyl-L-methionine = (E)-3-(methoxycarbonyl)pent-2-enedioate + S-adenosyl-L-homocysteine. Its function is as follows. Catalyzes the S-adenosylmethionine monomethyl esterification of trans-aconitate. The chain is Trans-aconitate 2-methyltransferase from Mycobacterium ulcerans (strain Agy99).